The primary structure comprises 282 residues: Acetyl-coenzyme A carboxylase carboxyl transferase subunit beta (282 aa).

Residues 29–282 (LWRTCPKCQR…LMKYGGKQND (254 aa)) enclose the CoA carboxyltransferase N-terminal domain. Positions 33, 36, 51, and 54 each coordinate Zn(2+). The segment at 33–54 (CPKCQRTLFAAQMDEYATCPGC) adopts a C4-type zinc-finger fold.

It belongs to the AccD/PCCB family. Acetyl-CoA carboxylase is a heterohexamer composed of biotin carboxyl carrier protein (AccB), biotin carboxylase (AccC) and two subunits each of ACCase subunit alpha (AccA) and ACCase subunit beta (AccD). Requires Zn(2+) as cofactor.

Its subcellular location is the cytoplasm. The enzyme catalyses N(6)-carboxybiotinyl-L-lysyl-[protein] + acetyl-CoA = N(6)-biotinyl-L-lysyl-[protein] + malonyl-CoA. The protein operates within lipid metabolism; malonyl-CoA biosynthesis; malonyl-CoA from acetyl-CoA: step 1/1. In terms of biological role, component of the acetyl coenzyme A carboxylase (ACC) complex. Biotin carboxylase (BC) catalyzes the carboxylation of biotin on its carrier protein (BCCP) and then the CO(2) group is transferred by the transcarboxylase to acetyl-CoA to form malonyl-CoA. The sequence is that of Acetyl-coenzyme A carboxylase carboxyl transferase subunit beta from Limosilactobacillus fermentum (strain NBRC 3956 / LMG 18251) (Lactobacillus fermentum).